A 405-amino-acid chain; its full sequence is Acetylornithine/succinyldiaminopimelate aminotransferase (405 aa).

Pyridoxal 5'-phosphate-binding positions include 107 to 108 (GA) and Phe-140. Arg-143 provides a ligand contact to N(2)-acetyl-L-ornithine. Residue 225–228 (DEVQ) coordinates pyridoxal 5'-phosphate. Lys-254 bears the N6-(pyridoxal phosphate)lysine mark. N(2)-acetyl-L-ornithine is bound at residue Thr-282. Residue Thr-283 participates in pyridoxal 5'-phosphate binding.

The protein belongs to the class-III pyridoxal-phosphate-dependent aminotransferase family. ArgD subfamily. Homodimer. Requires pyridoxal 5'-phosphate as cofactor.

It is found in the cytoplasm. The catalysed reaction is N(2)-acetyl-L-ornithine + 2-oxoglutarate = N-acetyl-L-glutamate 5-semialdehyde + L-glutamate. It carries out the reaction N-succinyl-(2S,6S)-2,6-diaminopimelate + 2-oxoglutarate = (S)-2-succinylamino-6-oxoheptanedioate + L-glutamate. It participates in amino-acid biosynthesis; L-arginine biosynthesis; N(2)-acetyl-L-ornithine from L-glutamate: step 4/4. Its pathway is amino-acid biosynthesis; L-lysine biosynthesis via DAP pathway; LL-2,6-diaminopimelate from (S)-tetrahydrodipicolinate (succinylase route): step 2/3. Functionally, involved in both the arginine and lysine biosynthetic pathways. This is Acetylornithine/succinyldiaminopimelate aminotransferase from Yersinia pestis.